We begin with the raw amino-acid sequence, 910 residues long: Potassium/sodium hyperpolarization-activated cyclic nucleotide-gated channel 1 (910 aa).

A disordered region spans residues 1–75 (MEGGGKPNSA…PAGSFEDAEG (75 aa)). Over 1–131 (MEGGGKPNSA…WIIHPYSDFR (131 aa)) the chain is Cytoplasmic. Residues 132-153 (FYWDLIMLIMMVGNLVIIPVGI) traverse the membrane as a helical segment. Residues 154–162 (TFFTEQTTT) lie on the Extracellular side of the membrane. The helical transmembrane segment at 163-183 (PWIIFNVASDTVFLLDLIMNF) threads the bilayer. Residues 184–204 (RTGTVNEDSSEIILDPKVIKM) are Cytoplasmic-facing. Residues 205-225 (NYLKSWFVVDFISSIPVDYIF) traverse the membrane as a helical segment. At 226 to 249 (LIVEKGMDSEVYKTARALRIVRFT) the chain is on the extracellular side. The helical; Voltage-sensor transmembrane segment at 250-270 (KILSLLRLLRLSRLIRYIHQW) threads the bilayer. Over 271–284 (EEIFHMTYDLASAV) the chain is Cytoplasmic. A helical transmembrane segment spans residues 285–307 (VRIFNLIGMMLLLCHWDGCLQFL). Over 308–333 (VPLLQDFPPDCWVSLNEMVNDSWGKQ) the chain is Extracellular. N-linked (GlcNAc...) asparagine glycosylation is present at N327. The pore-forming intramembrane region spans 334-355 (YSYALFKAMSHMLCIGYGAQAP). The short motif at 347–351 (CIGYG) is the Selectivity filter element. Over 356–360 (VSMSD) the chain is Extracellular. A helical transmembrane segment spans residues 361-381 (LWITMLSMIVGATCYAMFVGH). Over 382–910 (ATALIQSLDS…AEKPRFASNL (529 aa)) the chain is Cytoplasmic. G528, E529, C531, R538, T539, R579, and R582 together coordinate 3',5'-cyclic AMP. Disordered regions lie at residues 634–681 (TALN…QPSA), 771–791 (QQQQ…VHKS), and 865–910 (QMSS…ASNL). The span at 639-680 (TSSTTTPTSRMRTQSPPVYTATSLSHSNLHSPSPSTQTPQPS) shows a compositional bias: low complexity. Polar residues predominate over residues 780 to 791 (GSSTPKNEVHKS). Residues 875–885 (RGVPPAPPPPA) show a composition bias toward pro residues. The segment covering 900 to 910 (DAEKPRFASNL) has biased composition (basic and acidic residues).

The protein belongs to the potassium channel HCN family. In terms of assembly, homotetramer. Heterotetramer with HCN2. The potassium channel is composed of a homo- or heterotetrameric complex of pore-forming subunits. Interacts with KCNE2. Interacts with the SH3 domain of CSK. N-glycosylated. In terms of tissue distribution, predominantly expressed in brain. Highly expressed in apical dendrites of pyramidal neurons in the cortex, in the layer corresponding to the stratum lacunosum-moleculare in the hippocampus and in axons of basket cells in the cerebellum (at protein level). Expressed in a subset of elongated cells in taste buds.

The protein localises to the cell membrane. The catalysed reaction is Na(+)(in) = Na(+)(out). It carries out the reaction K(+)(in) = K(+)(out). With respect to regulation, activated by cAMP. cAMP binding causes a conformation change that leads to the assembly of an active tetramer and channel opening. Compared to other family members, cAMP has less stimulatory effect on HCN1 because part of the molecules already contain bound cAMP and form homotetramers when cAMP levels are low, this inherent tetramerization in HCN1 results in a weaker response to increased cAMP. In terms of biological role, hyperpolarization-activated ion channel that are permeable to sodium and potassium ions. Exhibits weak selectivity for potassium over sodium ions. Contributes to the native pacemaker currents in heart (If) and in neurons (Ih). Participates in cerebellar mechanisms of motor learning. May mediate responses to sour stimuli. This Mus musculus (Mouse) protein is Potassium/sodium hyperpolarization-activated cyclic nucleotide-gated channel 1 (Hcn1).